Here is a 518-residue protein sequence, read N- to C-terminus: Major facilitator superfamily domain-containing protein 8 (518 aa).

A disordered region spans residues 1-20 (MAGLRNESEQEPLLGDTPGS). At 1-40 (MAGLRNESEQEPLLGDTPGSREWDILETEEHYKSRWRSIR) the chain is on the cytoplasmic side. The short motif at 13 to 14 (LL) is the Dileucine internalization motif element. Residues 41 to 61 (ILYLTMFLSSVGFSVVMMSIW) traverse the membrane as a helical segment. At 62-74 (PYLQKIDPTADTS) the chain is on the extracellular side. Residues 75 to 95 (FLGWVIASYSLGQMVASPIFG) form a helical membrane-spanning segment. The Cytoplasmic segment spans residues 96–105 (LWSNYRPRKE). The chain crosses the membrane as a helical span at residues 106 to 126 (PLIVSILISVAANCLYAYLHI). The Extracellular segment spans residues 127-131 (PASHN). A helical transmembrane segment spans residues 132–152 (KYYMLVARGLLGIGAGNVAVV). At 153–173 (RSYTAGATSLQERTSSMANIS) the chain is on the cytoplasmic side. A helical membrane pass occupies residues 174 to 194 (MCQALGFILGPVFQTCFTFLG). The Extracellular segment spans residues 195–211 (EKGVTWDVIKLQINMYT). The helical transmembrane segment at 212 to 232 (TPVLLSAFLGILNIILILAIL) threads the bilayer. The Cytoplasmic segment spans residues 233 to 266 (REHRVDDSGRQCKSINFEEASTDEAQVPQGNIDQ). Residues 267–287 (VAVVAINVLFFVTLFIFALFE) traverse the membrane as a helical segment. Residues 288-304 (TIITPLTMDMYAWTQEQ) lie on the Extracellular side of the membrane. Residues 305–325 (AVLYNGIILAALGVEAVVIFL) traverse the membrane as a helical segment. Over 326–337 (GVKLLSKKIGER) the chain is Cytoplasmic. Residues 338-358 (AILLGGLIVVWVGFFILLPWG) traverse the membrane as a helical segment. The Extracellular portion of the chain corresponds to 359 to 412 (NQFPKIQWEDLHNNSIPNTTFGEIIIGLWKSPMEDDNERPTGCSIEQAWCLYTP). N371 and N376 each carry an N-linked (GlcNAc...) asparagine glycan. The chain crosses the membrane as a helical span at residues 413–433 (VIHLAQFLTSAVLIGLGYPVC). The Cytoplasmic portion of the chain corresponds to 434 to 451 (NLMSYTLYSKILGPKPQG). Residues 452–472 (VYMGWLTASGSGARILGPMFI) traverse the membrane as a helical segment. The Extracellular segment spans residues 473-482 (SQVYAHWGPR). A helical membrane pass occupies residues 483-503 (WAFSLVCGIIVLTITLLGVVY). At 504–518 (KRLIALSVRYGRIQE) the chain is on the cytoplasmic side.

Belongs to the major facilitator superfamily. Expressed at very low levels in all tissues tested.

Its subcellular location is the endosome membrane. The protein resides in the lysosome membrane. The catalysed reaction is chloride(in) = chloride(out). The enzyme catalyses iodide(out) = iodide(in). It carries out the reaction fluoride(in) = fluoride(out). Its activity is regulated as follows. Inhibited by chloride channel blockers 4,4'-diisothiocyano-2,2'-stilbenedisulfonate (DIDS), niflumic acid (NFA), and 5-Nitro-2-(3-phenylpropylamino) benzoic acid (NPPB). Outward-rectifying chloride channel involved in endolysosomal chloride homeostasis, membrane fusion and function. Conducts chloride currents up to hundreds of picoamperes. Regulates lysosomal calcium content by reducing the lysosomal membrane potential, thereby activating TRPML1 channel and further release of lysosomal calcium ions. Regulates the pH in endolysosomal compartments and may contribute to progressive acidification from endosome to lysosome. Permeable to other halides such as iodide and fluoride ions. The chain is Major facilitator superfamily domain-containing protein 8 from Homo sapiens (Human).